We begin with the raw amino-acid sequence, 372 residues long: Chemerin-like receptor 1 (372 aa).

Residues 1-39 lie on the Extracellular side of the membrane; that stretch reads MEYEGYNDSSIYGEEYSDGSDYIVDLEEAGPLEAKVAEV. An N-linked (GlcNAc...) asparagine glycan is attached at N7. Residues 40-62 traverse the membrane as a helical segment; sequence FLVVIYSLVCFLGILGNGLVIVI. The Cytoplasmic portion of the chain corresponds to 63 to 73; it reads ATFKMKKTVNT. A helical membrane pass occupies residues 74–95; the sequence is VWFVNLAVADFLFNIFLPIHIT. At 96-112 the chain is on the extracellular side; the sequence is YAAMDYHWVFGKAMCKI. An intrachain disulfide couples C110 to C188. Residues 113–133 traverse the membrane as a helical segment; the sequence is SSFLLSHNMYTSVFLLTVISF. Topologically, residues 134 to 152 are cytoplasmic; the sequence is DRCISVLLPVWSQNHRSVR. Residues 153 to 174 traverse the membrane as a helical segment; the sequence is LAYMTCVVVWVLAFFLSSPSLV. Over 175–223 the chain is Extracellular; it reads FRDTVSTSHGKITCFNNFSLAAPEPFSHSTHPRTDPVGYSRHVAVTVTR. N-linked (GlcNAc...) asparagine glycosylation is present at N191. A helical membrane pass occupies residues 224 to 244; sequence FLCGFLIPVFIITACYLTIVF. Residues 245–260 are Cytoplasmic-facing; it reads KLQRNRLAKTKKPFKI. Residues 261-281 traverse the membrane as a helical segment; the sequence is IITIIITFFLCWCPYHTLYLL. The Extracellular portion of the chain corresponds to 282-299; that stretch reads ELHHTAVPASVFSLGLPL. The chain crosses the membrane as a helical span at residues 300 to 319; the sequence is ATAVAIANSCMNPILYVFMG. Over 320-372 the chain is Cytoplasmic; sequence HDFKKFKVALFSRLVNALSEDTGPSSYPSHRSFTKMSSLIEKASVNEKETSTL. Phosphoserine is present on S338. T341 carries the post-translational modification Phosphothreonine. S348, S351, and S357 each carry phosphoserine. Position 371 is a phosphothreonine (T371).

It belongs to the chemokine-like receptor (CMKLR) family. High expression in heart and lung, low in small intestines, colon, kidney, liver, uterus and brain.

It is found in the cell membrane. Receptor for the chemoattractant adipokine chemerin/RARRES2 and for the omega-3 fatty acid derived molecule resolvin E1. Interaction with RARRES2 initiates activation of G proteins G(i)/G(o) and beta-arrestin pathways inducing cellular responses via second messenger pathways such as intracellular calcium mobilization, phosphorylation of MAP kinases MAPK1/MAPK3 (ERK1/2), TYRO3, MAPK14/P38MAPK and PI3K leading to multifunctional effects, like, reduction of immune responses, enhancing of adipogenesis and angionesis. Resolvin E1 down-regulates cytokine production in macrophages by reducing the activation of MAPK1/3 (ERK1/2) and NF-kappa-B. Positively regulates adipogenesis and adipocyte metabolism. The sequence is that of Chemerin-like receptor 1 (Cmklr1) from Rattus norvegicus (Rat).